Reading from the N-terminus, the 122-residue chain is Small ribosomal subunit protein uS13 (122 aa).

Residues 89 to 122 (GLRHRRGLPARGQRTKTNARTRKGPRRGVAGKRK) form a disordered region.

Belongs to the universal ribosomal protein uS13 family. In terms of assembly, part of the 30S ribosomal subunit. Forms a loose heterodimer with protein S19. Forms two bridges to the 50S subunit in the 70S ribosome.

In terms of biological role, located at the top of the head of the 30S subunit, it contacts several helices of the 16S rRNA. In the 70S ribosome it contacts the 23S rRNA (bridge B1a) and protein L5 of the 50S subunit (bridge B1b), connecting the 2 subunits; these bridges are implicated in subunit movement. Contacts the tRNAs in the A and P-sites. The chain is Small ribosomal subunit protein uS13 from Oleidesulfovibrio alaskensis (strain ATCC BAA-1058 / DSM 17464 / G20) (Desulfovibrio alaskensis).